Reading from the N-terminus, the 420-residue chain is Putative epoxide hydrolase (420 aa).

Belongs to the peptidase S33 family.

It functions in the pathway mycotoxin biosynthesis. In terms of biological role, putative epoxide hydrolase; part of the fragmented gene cluster that mediates the biosynthesis of dothistromin (DOTH), a polyketide toxin very similar in structure to the aflatoxin precursor, versicolorin B. The first step of the pathway is the conversion of acetate to norsolorinic acid (NOR) and requires the fatty acid synthase subunits hexA and hexB, as well as the polyketide synthase pksA. PksA combines a hexanoyl starter unit and 7 malonyl-CoA extender units to synthesize the precursor NOR. The hexanoyl starter unit is provided to the acyl-carrier protein (ACP) domain by the fungal fatty acid synthase hexA/hexB. The second step is the conversion of NOR to averantin (AVN) and requires the norsolorinic acid ketoreductase nor1, which catalyzes the dehydration of norsolorinic acid to form (1'S)-averantin. The cytochrome P450 monooxygenase avnA then catalyzes the hydroxylation of AVN to 5'hydroxyaverantin (HAVN). The next step is performed by adhA that transforms HAVN to averufin (AVF). Averufin might then be converted to hydroxyversicolorone by cypX and avfA. Hydroxyversicolorone is further converted versiconal hemiacetal acetate (VHA) by moxY. VHA is then the substrate for the versiconal hemiacetal acetate esterase est1 to yield versiconal (VAL). Versicolorin B synthase vbsA then converts VAL to versicolorin B (VERB) by closing the bisfuran ring. Then, the activity of the versicolorin B desaturase verB leads to versicolorin A (VERA). DotB, a predicted chloroperoxidase, may perform epoxidation of the A-ring of VERA. Alternatively, a cytochrome P450, such as cypX or avnA could catalyze this step. It is also possible that another, uncharacterized, cytochrome P450 enzyme is responsible for this step. Opening of the epoxide could potentially be achieved by the epoxide hydrolase epoA. However, epoA seems not to be required for DOTH biosynthesis, but other epoxide hydrolases may have the ability to complement this hydrolysis. Alternatively, opening of the epoxide ring could be achieved non-enzymatically. The next step is the deoxygenation of ring A to yield the 5,8-dihydroxyanthraquinone which is most likely catalyzed by the NADPH dehydrogenase encoded by ver1. The last stages of DOTH biosynthesis are proposed to involve hydroxylation of the bisfuran. OrdB and norB might have oxidative roles here. An alternative possibility is that cytochrome P450 monoogenases such as avnA and cypX might perform these steps in addition to previously proposed steps. This is Putative epoxide hydrolase from Dothistroma septosporum (Red band needle blight fungus).